The primary structure comprises 559 residues: T-complex protein 1 subunit gamma (559 aa).

Cys368 and Cys374 are oxidised to a cystine. Residues 531-559 form a disordered region; that stretch reads KDKRGGAGQRGGDRGQGDQEETFGDQRDG.

Belongs to the TCP-1 chaperonin family. As to quaternary structure, heterooligomeric complex of about 850 to 900 kDa that forms two stacked rings, 12 to 16 nm in diameter.

The protein localises to the cytoplasm. Functionally, molecular chaperone; assists the folding of proteins upon ATP hydrolysis. Known to play a role, in vitro, in the folding of actin and tubulin. This is T-complex protein 1 subunit gamma from Oxytricha granulifera (Ciliate).